We begin with the raw amino-acid sequence, 1024 residues long: RNA cytidine acetyltransferase (1024 aa).

287–296 (GRGKSAALGL) lines the ATP pocket. Lys-426 carries the N6-acetyllysine modification. Arg-470 lines the ATP pocket. An N-acetyltransferase domain is found at 558–753 (CLLPPVPPTQ…HSCIMLKTLA (196 aa)). Acetyl-CoA contacts are provided by residues 629 to 631 (IAV) and 636 to 642 (QGMGYGS). The segment at 702–1024 (PAERLDYLGV…RKDMKLKRKK (323 aa)) is required for localization to the nucleolus and midbody. Thr-716 is modified (phosphothreonine). Residue Arg-725 participates in acetyl-CoA binding. Ser-934, Ser-984, and Ser-987 each carry phosphoserine. Residues 990–1024 (SDKKRKLETKQEPKQSKKLKKRDNNRKDMKLKRKK) form a disordered region. The segment covering 1005 to 1024 (SKKLKKRDNNRKDMKLKRKK) has biased composition (basic residues).

It belongs to the RNA cytidine acetyltransferase family. NAT10 subfamily. Part of the small subunit (SSU) processome, composed of more than 70 proteins and the RNA chaperone small nucleolar RNA (snoRNA) U3. Interacts with THUMPD1. Interacts with SUN1 (via N-terminus). Interacts with TERT.

It is found in the nucleus. Its subcellular location is the nucleolus. The enzyme catalyses a cytidine in 18S rRNA + acetyl-CoA + ATP + H2O = an N(4)-acetylcytidine in 18S rRNA + ADP + phosphate + CoA + H(+). The catalysed reaction is a cytidine in tRNA + acetyl-CoA + ATP + H2O = an N(4)-acetylcytidine in tRNA + ADP + phosphate + CoA + H(+). It catalyses the reaction a cytidine in mRNA + acetyl-CoA + ATP + H2O = an N(4)-acetylcytidine in mRNA + ADP + phosphate + CoA + H(+). Functionally, RNA cytidine acetyltransferase that catalyzes the formation of N(4)-acetylcytidine (ac4C) modification on mRNAs, 18S rRNA and tRNAs. Catalyzes ac4C modification of a broad range of mRNAs, enhancing mRNA stability and translation. mRNA ac4C modification is frequently present within wobble cytidine sites and promotes translation efficiency. Mediates the formation of ac4C at position 1842 in 18S rRNA. May also catalyze the formation of ac4C at position 1337 in 18S rRNA. Required for early nucleolar cleavages of precursor rRNA at sites A0, A1 and A2 during 18S rRNA synthesis. Catalyzes the formation of ac4C in serine and leucine tRNAs. Requires the tRNA-binding adapter protein THUMPD1 for full tRNA acetyltransferase activity but not for 18S rRNA acetylation. In addition to RNA acetyltransferase activity, also able to acetylate lysine residues of proteins, such as histones, microtubules, p53/TP53 and MDM2, in vitro. The relevance of the protein lysine acetyltransferase activity is however unsure in vivo. Activates telomerase activity by stimulating the transcription of TERT, and may also regulate telomerase function by affecting the balance of telomerase subunit assembly, disassembly, and localization. Involved in the regulation of centrosome duplication by acetylating CENATAC during mitosis, promoting SASS6 proteasome degradation. Part of the small subunit (SSU) processome, first precursor of the small eukaryotic ribosomal subunit. During the assembly of the SSU processome in the nucleolus, many ribosome biogenesis factors, an RNA chaperone and ribosomal proteins associate with the nascent pre-rRNA and work in concert to generate RNA folding, modifications, rearrangements and cleavage as well as targeted degradation of pre-ribosomal RNA by the RNA exosome. In Mus musculus (Mouse), this protein is RNA cytidine acetyltransferase.